Here is a 154-residue protein sequence, read N- to C-terminus: MGLSDGEWQLVLNVWGKVEADIPGHGQEVLIRLFKGHPETLEKFDKFKHLKSEDEMKASEDLKKHGATVLTALGGILKKKGHHEAEIKPLAQSHATKHKIPVKYLEFISECIIQVLQSKHPGDFGADAQGAMNKALELFRKDMASNYKELGFQG.

The 147-residue stretch at 2-148 (GLSDGEWQLV…FRKDMASNYK (147 aa)) folds into the Globin domain. Serine 4 is modified (phosphoserine). Position 65 (histidine 65) interacts with nitrite. Position 65 (histidine 65) interacts with O2. Threonine 68 bears the Phosphothreonine mark. Histidine 94 contacts heme b.

It belongs to the globin family. Monomeric.

Its subcellular location is the cytoplasm. It localises to the sarcoplasm. The enzyme catalyses Fe(III)-heme b-[protein] + nitric oxide + H2O = Fe(II)-heme b-[protein] + nitrite + 2 H(+). It carries out the reaction H2O2 + AH2 = A + 2 H2O. In terms of biological role, monomeric heme protein which primary function is to store oxygen and facilitate its diffusion within muscle tissues. Reversibly binds oxygen through a pentacoordinated heme iron and enables its timely and efficient release as needed during periods of heightened demand. Depending on the oxidative conditions of tissues and cells, and in addition to its ability to bind oxygen, it also has a nitrite reductase activity whereby it regulates the production of bioactive nitric oxide. Under stress conditions, like hypoxia and anoxia, it also protects cells against reactive oxygen species thanks to its pseudoperoxidase activity. In Homo sapiens (Human), this protein is Myoglobin.